Reading from the N-terminus, the 257-residue chain is MLAKRLVPCLDVKDGKVVKGVQFRNHEIVGDIVPLAARYAEEGADELVFYDITASAHERVVDKSWVSRVAEQIDIPFCVAGGIKTISQARELLAFGADKISINSPALTDPSLISRLQDEFGRQCIVIGIDSFFDATSNSYKVKQFTGDEAATKDTQWFTQDWVEEVQKRGCGEIVLNVMNQDGVRGGYDIKQLSLVRAICDVPLIASGGAGTMAHFRDVFIEAKVDAALAASVFHKAIINIGELKAYLAAEDIAIRR.

Catalysis depends on residues aspartate 11 and aspartate 130.

Belongs to the HisA/HisF family. As to quaternary structure, heterodimer of HisH and HisF.

The protein resides in the cytoplasm. The enzyme catalyses 5-[(5-phospho-1-deoxy-D-ribulos-1-ylimino)methylamino]-1-(5-phospho-beta-D-ribosyl)imidazole-4-carboxamide + L-glutamine = D-erythro-1-(imidazol-4-yl)glycerol 3-phosphate + 5-amino-1-(5-phospho-beta-D-ribosyl)imidazole-4-carboxamide + L-glutamate + H(+). It participates in amino-acid biosynthesis; L-histidine biosynthesis; L-histidine from 5-phospho-alpha-D-ribose 1-diphosphate: step 5/9. Its function is as follows. IGPS catalyzes the conversion of PRFAR and glutamine to IGP, AICAR and glutamate. The HisF subunit catalyzes the cyclization activity that produces IGP and AICAR from PRFAR using the ammonia provided by the HisH subunit. The polypeptide is Imidazole glycerol phosphate synthase subunit HisF (Shewanella baltica (strain OS155 / ATCC BAA-1091)).